The sequence spans 569 residues: MKDLKLSNFKGKFISRTSHWGLTGKKLRYFITIASMTGFSLFGYDQGLMASLITGKQFNYEFPATKENGDHDRHATVVQGATTSCYELGCFAGSLFVMFCGERIGRKPLILMGSVITIIGAVISTCAFRGYWALGQFIIGRVVTGVGTGLNTSTIPVWQSEMSKAENRGLLVNLEGSTIAFGTMIAYWIDFGLSYTNSSVQWRFPVSMQIVFALFLLAFMIKLPESPRWLISQSRTEEARYLVGTLDDADPNDEEVITEVAMLHDAVNRTKHEKHSLSSLFSRGRSQNLQRALIAASTQFFQQFTGCNAAIYYSTVLFNKTIKLDYRLSMIIGGVFATIYALSTIGSFFLIEKLGRRKLFLLGATGQAVSFTITFACLVKENKENARGAAVGLFLFITFFGLSLLSLPWIYPPEIASMKVRASTNAFSTCTNWLCNFAVVMFTPIFIGQSGWGCYLFFAVMNYLYIPVIFFFYPETAGRSLEEIDIIFAKAYEDGTQPWRVANHLPKLSLQEVEDHANALGSYDDEMEKEDFGEDRVEDTYNQINGDNSSSSSNIKNEDTVNDKANFEG.

Topologically, residues 1–29 (MKDLKLSNFKGKFISRTSHWGLTGKKLRY) are cytoplasmic. The helical transmembrane segment at 30-50 (FITIASMTGFSLFGYDQGLMA) threads the bilayer. The Extracellular portion of the chain corresponds to 51 to 79 (SLITGKQFNYEFPATKENGDHDRHATVVQ). Residues 80–100 (GATTSCYELGCFAGSLFVMFC) traverse the membrane as a helical segment. Over 101–107 (GERIGRK) the chain is Cytoplasmic. The chain crosses the membrane as a helical span at residues 108 to 128 (PLILMGSVITIIGAVISTCAF). Position 129 (Arg129) is a topological domain, extracellular. Residues 130–150 (GYWALGQFIIGRVVTGVGTGL) traverse the membrane as a helical segment. The Cytoplasmic portion of the chain corresponds to 151–168 (NTSTIPVWQSEMSKAENR). Residues 169-189 (GLLVNLEGSTIAFGTMIAYWI) traverse the membrane as a helical segment. The Extracellular portion of the chain corresponds to 190-203 (DFGLSYTNSSVQWR). Asn197 carries N-linked (GlcNAc...) asparagine glycosylation. Residues 204–224 (FPVSMQIVFALFLLAFMIKLP) traverse the membrane as a helical segment. At 225-291 (ESPRWLISQS…SRGRSQNLQR (67 aa)) the chain is on the cytoplasmic side. The chain crosses the membrane as a helical span at residues 292-312 (ALIAASTQFFQQFTGCNAAIY). The Extracellular segment spans residues 313 to 330 (YSTVLFNKTIKLDYRLSM). Asn319 is a glycosylation site (N-linked (GlcNAc...) asparagine). A helical transmembrane segment spans residues 331-351 (IIGGVFATIYALSTIGSFFLI). Over 352-358 (EKLGRRK) the chain is Cytoplasmic. The helical transmembrane segment at 359-379 (LFLLGATGQAVSFTITFACLV) threads the bilayer. At 380 to 389 (KENKENARGA) the chain is on the extracellular side. Residues 390-410 (AVGLFLFITFFGLSLLSLPWI) form a helical membrane-spanning segment. Residues 411–426 (YPPEIASMKVRASTNA) lie on the Cytoplasmic side of the membrane. The chain crosses the membrane as a helical span at residues 427–447 (FSTCTNWLCNFAVVMFTPIFI). The Extracellular portion of the chain corresponds to 448-453 (GQSGWG). Residues 454-474 (CYLFFAVMNYLYIPVIFFFYP) form a helical membrane-spanning segment. The Cytoplasmic portion of the chain corresponds to 475–569 (ETAGRSLEEI…TVNDKANFEG (95 aa)). Residues 524–533 (DDEMEKEDFG) are compositionally biased toward acidic residues. Positions 524-569 (DDEMEKEDFGEDRVEDTYNQINGDNSSSSSNIKNEDTVNDKANFEG) are disordered. Residues 556–569 (KNEDTVNDKANFEG) are compositionally biased toward basic and acidic residues.

It belongs to the major facilitator superfamily. Sugar transporter (TC 2.A.1.1) family.

The protein localises to the membrane. The chain is Sugar transporter STL1 (STL1) from Saccharomyces cerevisiae (strain ATCC 204508 / S288c) (Baker's yeast).